Here is a 148-residue protein sequence, read N- to C-terminus: D-aminoacyl-tRNA deacylase (148 aa).

The Gly-cisPro motif, important for rejection of L-amino acids motif lies at 137–138 (GP).

This sequence belongs to the DTD family. In terms of assembly, homodimer.

The protein localises to the cytoplasm. The enzyme catalyses glycyl-tRNA(Ala) + H2O = tRNA(Ala) + glycine + H(+). The catalysed reaction is a D-aminoacyl-tRNA + H2O = a tRNA + a D-alpha-amino acid + H(+). In terms of biological role, an aminoacyl-tRNA editing enzyme that deacylates mischarged D-aminoacyl-tRNAs. Also deacylates mischarged glycyl-tRNA(Ala), protecting cells against glycine mischarging by AlaRS. Acts via tRNA-based rather than protein-based catalysis; rejects L-amino acids rather than detecting D-amino acids in the active site. By recycling D-aminoacyl-tRNA to D-amino acids and free tRNA molecules, this enzyme counteracts the toxicity associated with the formation of D-aminoacyl-tRNA entities in vivo and helps enforce protein L-homochirality. The protein is D-aminoacyl-tRNA deacylase of Ligilactobacillus salivarius (strain UCC118) (Lactobacillus salivarius).